Reading from the N-terminus, the 539-residue chain is Zinc finger and BTB domain-containing protein 7B (539 aa).

The 82-residue stretch at 34-115 (CDLTIRTQGL…AYTATLTTSS (82 aa)) folds into the BTB domain. Position 150 is a phosphoserine (serine 150). The tract at residues 171 to 308 (ASGVPNGEDS…SPEELGSDED (138 aa)) is disordered. Positions 182-196 (PQVPLPPPPPPPPRP) are enriched in pro residues. The segment covering 197–206 (VARRSRKPRK) has biased composition (basic residues). Lysine 206 and lysine 212 each carry N6-acetyllysine; by EP300; alternate. Glycyl lysine isopeptide (Lys-Gly) (interchain with G-Cter in ubiquitin); alternate cross-links involve residues lysine 206 and lysine 212. Over residues 273-282 (YEGEEEEEEL) the composition is skewed to acidic residues. The residue at position 335 (lysine 335) is an N6-acetyllysine; by EP300; alternate. Residue lysine 335 forms a Glycyl lysine isopeptide (Lys-Gly) (interchain with G-Cter in ubiquitin); alternate linkage. Residues 344–400 (MPQECPVCHKIIHGAGKLPRHMRTHTGEKPFACEVCGVRFTRNDKLKIHMRKHTGER) are required for interaction with and acetylation by EP300. The segment at 346-368 (QECPVCHKIIHGAGKLPRHMRTH) adopts a C2H2-type 1 zinc-finger fold. The residue at position 369 (threonine 369) is a Phosphothreonine. C2H2-type zinc fingers lie at residues 374–396 (FACE…MRKH) and 402–424 (YSCP…MHLH). The C2H2-type 4; atypical zinc-finger motif lies at 430-454 (YECHLCHKAFAKEDHLQRHLKGQNC). Disordered stretches follow at residues 458–486 (RTRR…GLDL) and 501–539 (FWEQ…MESS). Residues 508 to 517 (TGPPVSTPGP) are compositionally biased toward pro residues.

As to quaternary structure, homodimerizes. Interacts with NCL, NEDD4 and YBX1. Interacts with HNRNPU (via RNA-binding RGG-box region); the interaction facilitates the recruitment of long non-coding RNA Blnc1 by ZBTB7B. Interacts with HDAC4 and HDAC5; the interaction allows the recruitment of HDAC4 and HDAC5 on CD8 loci for deacetylation and possible inhibition of CD8 genes expression. Post-translationally, acetylated directly and specifically by EP300. EP300-mediated acetylation of Lys-206, Lys-212 and Lys-335 stabilizes the protein by antagonizing ubiquitin conjugation. In terms of processing, ubiquitinated, leading to proteasomal degradation. Competes with acetylation on Lys-206, Lys-212 and Lys-335.

It is found in the nucleus. Its function is as follows. Transcription regulator that acts as a key regulator of lineage commitment of immature T-cell precursors. Exerts distinct biological functions in the mammary epithelial cells and T cells in a tissue-specific manner. Necessary and sufficient for commitment of CD4 lineage, while its absence causes CD8 commitment. Development of immature T-cell precursors (thymocytes) to either the CD4 helper or CD8 killer T-cell lineages correlates precisely with their T-cell receptor specificity for major histocompatibility complex class II or class I molecules, respectively. Cross-antagonism between ZBTB7B and CBF complexes are determinative to CD4 versus CD8 cell fate decision. Suppresses RUNX3 expression and imposes CD4+ lineage fate by inducing the SOCS suppressors of cytokine signaling. induces, as a transcriptional activator, SOCS genes expression which represses RUNX3 expression and promotes the CD4+ lineage fate. During CD4 lineage commitment, associates with multiple sites at the CD8 locus, acting as a negative regulator of the CD8 promoter and enhancers by epigenetic silencing through the recruitment of class II histone deacetylases, such as HDAC4 and HDAC5, to these loci. Regulates the development of IL17-producing CD1d-restricted naural killer (NK) T cells. Also functions as an important metabolic regulator in the lactating mammary glands. Critical feed-forward regulator of insulin signaling in mammary gland lactation, directly regulates expression of insulin receptor substrate-1 (IRS-1) and insulin-induced Akt-mTOR-SREBP signaling. Transcriptional repressor of the collagen COL1A1 and COL1A2 genes. May also function as a repressor of fibronectin and possibly other extracellular matrix genes. Potent driver of brown fat development, thermogenesis and cold-induced beige fat formation. Recruits the brown fat lncRNA 1 (Blnc1):HNRNPU ribonucleoprotein complex to activate thermogenic gene expression in brown and beige adipocytes. The polypeptide is Zinc finger and BTB domain-containing protein 7B (Homo sapiens (Human)).